We begin with the raw amino-acid sequence, 486 residues long: Portal protein (486 aa).

Positions 456–486 (MVDADPTVPGSPSPTAPPKPQPAIESSGGDA) are disordered. Positions 464 to 476 (PGSPSPTAPPKPQ) are enriched in pro residues.

Belongs to the SPP1-like portal protein family. Homododecamer.

It localises to the virion. Forms the portal vertex of the capsid. This portal plays critical roles in head assembly, genome packaging, neck/tail attachment, and genome ejection. The portal protein multimerizes as a single ring-shaped homododecamer arranged around a central channel. Binds to the terminase subunits to form the packaging machine. This Mycobacterium phage L5 (Mycobacteriophage L5) protein is Portal protein (14).